The following is a 434-amino-acid chain: Probable carboxypeptidase BDCG_03757 (434 aa).

The signal sequence occupies residues 1-20; it reads MKLSHLAAALSAQLVAPVAA. N-linked (GlcNAc...) asparagine glycosylation is found at Asn136 and Asn150. Position 160 (Asp160) interacts with Zn(2+). The active-site Proton acceptor is the Glu192. Glu193 is a Zn(2+) binding site. N-linked (GlcNAc...) asparagine glycosylation occurs at Asn343.

Belongs to the peptidase M20A family. The cofactor is Zn(2+).

It is found in the secreted. The polypeptide is Probable carboxypeptidase BDCG_03757 (Ajellomyces dermatitidis (strain ER-3 / ATCC MYA-2586) (Blastomyces dermatitidis)).